A 525-amino-acid polypeptide reads, in one-letter code: Arylsulfatase G (525 aa).

An N-terminal signal peptide occupies residues 1–16 (MGWLFLKVLLVGMAFS). Residues aspartate 44, aspartate 45, and cysteine 84 each coordinate Ca(2+). Cysteine 84 acts as the Nucleophile in catalysis. Cysteine 84 carries the post-translational modification 3-oxoalanine (Cys). An N-linked (GlcNAc...) asparagine glycan is attached at asparagine 117. Residue lysine 137 coordinates substrate. The active site involves histidine 139. Serine 162 lines the substrate pocket. Residue asparagine 215 is glycosylated (N-linked (GlcNAc...) asparagine). Histidine 251 is a binding site for substrate. Residues aspartate 302 and asparagine 303 each coordinate Ca(2+). 2 N-linked (GlcNAc...) asparagine glycosylation sites follow: asparagine 356 and asparagine 497.

The protein belongs to the sulfatase family. The cofactor is Ca(2+). In terms of processing, N-glycosylated with both high mannose and complex type sugars. The conversion to 3-oxoalanine (also known as C-formylglycine, FGly), of a serine or cysteine residue in prokaryotes and of a cysteine residue in eukaryotes, is critical for catalytic activity. Post-translationally, the 63-kDa precursor undergoes proteolytic processing in two steps, yielding two fragments in the first step (apparent molecular masses of 44 and 18 kDa). In the second step, the 44-kDa fragment is processed further to the 34- and 10-kDa chains. The 10-kDa chain is a cleavage product of the 44-kDa fragment but linked to the 18-kDa chain through a disulfide bridge. As to expression, highly expressed in the spleen, kidney, liver, brain, and testis (at protein level).

It localises to the lysosome. The catalysed reaction is an aryl sulfate + H2O = a phenol + sulfate + H(+). It catalyses the reaction Hydrolysis of the 3-sulfate groups of the N-sulfo-D-glucosamine 3-O-sulfate units of heparin.. Its function is as follows. Displays arylsulfatase activity at acidic pH towards the artificial substrate p-nitrocatechol sulfate. Catalyzes the hydrolysis of the 3-sulfate groups of the N-sulfo-D-glucosamine 3-O-sulfate units of heparin. The protein is Arylsulfatase G (Arsg) of Mus musculus (Mouse).